We begin with the raw amino-acid sequence, 374 residues long: Large ribosomal subunit protein bL27m (374 aa).

The N-terminal 41 residues, 1–41, are a transit peptide targeting the mitochondrion; the sequence is MLRLSGVKSAVRARAAAGAAFSVSLSGPQAVSLLALPLVRH.

The protein belongs to the bacterial ribosomal protein bL27 family.

It localises to the mitochondrion. In terms of biological role, component of the large subunit of mitochondrial ribosome. This chain is Large ribosomal subunit protein bL27m (MRPL2), found in Yarrowia lipolytica (strain CLIB 122 / E 150) (Yeast).